An 881-amino-acid chain; its full sequence is Valine--tRNA ligase (881 aa).

The 'HIGH' region motif lies at 49–59; sequence PNVTGKLHLGH. Residues 526–530 carry the 'KMSKS' region motif; sequence KMSKS. Lys-529 is a binding site for ATP. Positions 810 to 881 form a coiled coil; the sequence is LADLINLDEE…VRQRLADLEK (72 aa).

The protein belongs to the class-I aminoacyl-tRNA synthetase family. ValS type 1 subfamily. In terms of assembly, monomer.

Its subcellular location is the cytoplasm. The enzyme catalyses tRNA(Val) + L-valine + ATP = L-valyl-tRNA(Val) + AMP + diphosphate. In terms of biological role, catalyzes the attachment of valine to tRNA(Val). As ValRS can inadvertently accommodate and process structurally similar amino acids such as threonine, to avoid such errors, it has a 'posttransfer' editing activity that hydrolyzes mischarged Thr-tRNA(Val) in a tRNA-dependent manner. The chain is Valine--tRNA ligase from Bacillus cereus (strain ATCC 10987 / NRS 248).